Reading from the N-terminus, the 493-residue chain is 3-octaprenyl-4-hydroxybenzoate carboxy-lyase (493 aa).

Asparagine 172 is a binding site for Mn(2+). Prenylated FMN-binding positions include 175–177 (IYR), 189–191 (RWL), and 194–195 (RG). Glutamate 238 contributes to the Mn(2+) binding site. Aspartate 287 serves as the catalytic Proton donor.

Belongs to the UbiD family. In terms of assembly, homohexamer. Prenylated FMN is required as a cofactor. The cofactor is Mn(2+).

The protein localises to the cell membrane. The catalysed reaction is a 4-hydroxy-3-(all-trans-polyprenyl)benzoate + H(+) = a 2-(all-trans-polyprenyl)phenol + CO2. It functions in the pathway cofactor biosynthesis; ubiquinone biosynthesis. Functionally, catalyzes the decarboxylation of 3-octaprenyl-4-hydroxy benzoate to 2-octaprenylphenol, an intermediate step in ubiquinone biosynthesis. The protein is 3-octaprenyl-4-hydroxybenzoate carboxy-lyase of Shewanella loihica (strain ATCC BAA-1088 / PV-4).